The primary structure comprises 216 residues: Ribose-5-phosphate isomerase A (216 aa).

Substrate contacts are provided by residues Thr-26–Thr-29, Asp-79–Asp-82, and Lys-92–Gly-95. The active-site Proton acceptor is the Glu-101. Position 119 (Lys-119) interacts with substrate.

The protein belongs to the ribose 5-phosphate isomerase family. Homodimer.

The catalysed reaction is aldehydo-D-ribose 5-phosphate = D-ribulose 5-phosphate. The protein operates within carbohydrate degradation; pentose phosphate pathway; D-ribose 5-phosphate from D-ribulose 5-phosphate (non-oxidative stage): step 1/1. Catalyzes the reversible conversion of ribose-5-phosphate to ribulose 5-phosphate. This chain is Ribose-5-phosphate isomerase A, found in Legionella pneumophila (strain Lens).